The following is a 152-amino-acid chain: Cytochrome c-type biogenesis protein CcmE (152 aa).

Residues 1-9 (MRGLKKQRR) are Cytoplasmic-facing. The helical; Signal-anchor for type II membrane protein transmembrane segment at 10 to 30 (IQILIVAAVALTLSSVLIGYA) threads the bilayer. At 31–152 (LRDGINFFRP…PDGYARDGDS (122 aa)) the chain is on the periplasmic side. Heme contacts are provided by His-123 and Tyr-127.

It belongs to the CcmE/CycJ family.

Its subcellular location is the cell inner membrane. Functionally, heme chaperone required for the biogenesis of c-type cytochromes. Transiently binds heme delivered by CcmC and transfers the heme to apo-cytochromes in a process facilitated by CcmF and CcmH. The sequence is that of Cytochrome c-type biogenesis protein CcmE from Jannaschia sp. (strain CCS1).